A 223-amino-acid chain; its full sequence is TMF-regulated nuclear protein 1 (223 aa).

2 disordered regions span residues 1-84 (MPGC…GPAG) and 196-223 (GRLR…SPQR). Pro residues predominate over residues 21–54 (GSPPPPPREPLPSLQPPSPSPTSTPTPTKSPPLP). Over residues 73 to 84 (ASGGSGGAGPAG) the composition is skewed to gly residues.

Interacts with TMF1; may regulate TRNP1 proteasomal degradation. Post-translationally, ubiquitinated, leading to its degradation by the proteasome. In terms of tissue distribution, expressed in brain and kidney (at protein level). Also detected in spleen and intestine.

The protein resides in the nucleus. Its function is as follows. DNA-binding factor that regulates the expression of a subset of genes and plays a key role in tangential, radial, and lateral expansion of the brain neocortex. Regulates neural stem cells proliferation and the production of intermediate neural progenitors and basal radial glial cells affecting the process of cerebral cortex gyrification. May control the proliferation rate of cells by regulating their progression through key cell-cycle transition points. The protein is TMF-regulated nuclear protein 1 (Trnp1) of Mus musculus (Mouse).